A 311-amino-acid polypeptide reads, in one-letter code: Acetyl-coenzyme A carboxylase carboxyl transferase subunit beta (311 aa).

A CoA carboxyltransferase N-terminal domain is found at 32 to 299; that stretch reads LWVKCPVSEE…TSMPAALTPP (268 aa). Residues 291-311 are disordered; that stretch reads SMPAALTPPAPDHVVADGGSH.

This sequence belongs to the AccD/PCCB family. As to quaternary structure, acetyl-CoA carboxylase is a heterohexamer composed of biotin carboxyl carrier protein (AccB), biotin carboxylase (AccC) and two subunits each of ACCase subunit alpha (AccA) and ACCase subunit beta (AccD).

Its subcellular location is the cytoplasm. It catalyses the reaction N(6)-carboxybiotinyl-L-lysyl-[protein] + acetyl-CoA = N(6)-biotinyl-L-lysyl-[protein] + malonyl-CoA. It functions in the pathway lipid metabolism; malonyl-CoA biosynthesis; malonyl-CoA from acetyl-CoA: step 1/1. Component of the acetyl coenzyme A carboxylase (ACC) complex. Biotin carboxylase (BC) catalyzes the carboxylation of biotin on its carrier protein (BCCP) and then the CO(2) group is transferred by the transcarboxylase to acetyl-CoA to form malonyl-CoA. This is Acetyl-coenzyme A carboxylase carboxyl transferase subunit beta from Maricaulis maris (strain MCS10) (Caulobacter maris).